The sequence spans 58 residues: UPF0391 membrane protein ABO_0024 (58 aa).

A run of 2 helical transmembrane segments spans residues 4-24 and 28-48; these read WALTFLVVAIIAGVLGFGGIA and ASIAKIIFFIFLALLVISLVV.

This sequence belongs to the UPF0391 family.

It localises to the cell membrane. This Alcanivorax borkumensis (strain ATCC 700651 / DSM 11573 / NCIMB 13689 / SK2) protein is UPF0391 membrane protein ABO_0024.